Reading from the N-terminus, the 53-residue chain is Beta-defensin C7 (53 aa).

3 disulfide bridges follow: Cys-20–Cys-49, Cys-27–Cys-42, and Cys-32–Cys-50.

The protein belongs to the beta-defensin family.

It localises to the secreted. In terms of biological role, has bactericidal activity. This chain is Beta-defensin C7, found in Bos taurus (Bovine).